A 234-amino-acid chain; its full sequence is Leucyl/phenylalanyl-tRNA--protein transferase (234 aa).

This sequence belongs to the L/F-transferase family.

The protein localises to the cytoplasm. The enzyme catalyses N-terminal L-lysyl-[protein] + L-leucyl-tRNA(Leu) = N-terminal L-leucyl-L-lysyl-[protein] + tRNA(Leu) + H(+). It carries out the reaction N-terminal L-arginyl-[protein] + L-leucyl-tRNA(Leu) = N-terminal L-leucyl-L-arginyl-[protein] + tRNA(Leu) + H(+). The catalysed reaction is L-phenylalanyl-tRNA(Phe) + an N-terminal L-alpha-aminoacyl-[protein] = an N-terminal L-phenylalanyl-L-alpha-aminoacyl-[protein] + tRNA(Phe). In terms of biological role, functions in the N-end rule pathway of protein degradation where it conjugates Leu, Phe and, less efficiently, Met from aminoacyl-tRNAs to the N-termini of proteins containing an N-terminal arginine or lysine. The sequence is that of Leucyl/phenylalanyl-tRNA--protein transferase from Pseudoalteromonas atlantica (strain T6c / ATCC BAA-1087).